Reading from the N-terminus, the 980-residue chain is MGIPAAFRWLSTRYPKIISPVIEDQPLVMEDGSTIPVDTTRPNPNGEEFDNLYLDMNGIVHPCSHPEDRPAPKDEEEMMMEVFRYTDRVVNMVRPRKILMIAVDGVAPRAKMNQQRSRRFRSAQEAQEKEQDKQELIKMLKQQNGGNLSTESLETVTKKAFDSNSITPGTPFMDILALSLRYWCQYKLNTDPGWAKLKIIISDATVPGEGEHKIMNFVRSQRASPDHDPNTRHVIYGLDADLIMLGLATHEPHFRVLREDVFFQDQKARLCKICGQKGHDAQNCRGEEKKKDGEHDEKDKGVALKPFIWLHVAVLREYLAVELGVPNLPFRFDLERAVDDWIFMCCFVGNDFLPHLPALEIREHGIDTLTKIWKDNLPVMGGYVTKDGHIDLERAQVILDGLAQQEDNIFKRRKEQEDRREANFKRRKLQNEVNGRGGRQGGPSHPKKINGHENPENGLPLQAVGAYTGRHEQTLTHDMVVNRSTAPDANVANKSAASVLKAQLQSQKSLSNPKPENPEQESPSALGKRKASSIEEGNSSVPDAASVSTPSTSAEEGPVDDVRLWEDGYADRYYEKKFHKDPKDIEFRHGVGRAYVEGLAWVLLYYFQGCPSWEWYYPYHYAPFAADFKDIAKMNISFEKGRVSKPFEQLMSVLPAASRHALPEVFHDLMLNPESNIIDFYPEDFEIDLNGKKFAWQGVALLPFIEMPRLLAAVQSKYPELSAADSARNEMGRDVLIFSEGHESLYDEVLTKFYSKKQGDSKFKLNPKKSDGLSGRVEKKEGYVPHSELKYPLERNSMPDLDYDRSVSVYYDFPQASQTHKSMLLRGVQLPTPALTQNDIQDMRSRANRGGRGGFGRGHDRGGYNGPGMTRGSQYNRNQGGYGRGNGHYPPAPASHVPPPPGAPGFGIGVPPPPPPNSYHNQPYDNRYGASSGYNQYRGPPHPANGAPGYHGHGDASSERGRGSGGYSSRGRYRDNRSYR.

Positions 111–133 (KMNQQRSRRFRSAQEAQEKEQDK) are disordered. The stretch at 121–145 (RSAQEAQEKEQDKQELIKMLKQQNG) forms a coiled coil. The CCHC-type zinc-finger motif lies at 269 to 286 (RLCKICGQKGHDAQNCRG). Positions 411-435 (KRRKEQEDRREANFKRRKLQNEVNG) form a coiled coil. Basic and acidic residues predominate over residues 413 to 424 (RKEQEDRREANF). Disordered regions lie at residues 413 to 461 (RKEQ…GLPL), 491 to 560 (VANK…GPVD), and 845 to 980 (SRAN…RSYR). Composition is skewed to polar residues over residues 503–514 (QLQSQKSLSNPK) and 535–554 (EEGNSSVPDAASVSTPSTSA). Residues 890 to 903 (PPAPASHVPPPPGA) show a composition bias toward pro residues. Over residues 952–962 (GHGDASSERGR) the composition is skewed to basic and acidic residues.

It belongs to the 5'-3' exonuclease family. XRN2/RAT1 subfamily. As to quaternary structure, interacts with RAI1; the interaction is direct, stabilizes RAT1 protein structure and may stimulate its exoribonuclease activity. The interaction also stimulates RAI1 pyrophosphohydrolase activity, probably by recruiting it to mRNA substrates.

It localises to the nucleus. In terms of biological role, possesses 5'-&gt;3' exoribonuclease activity. Required for the processing of nuclear mRNA and rRNA precursors. May promote the termination of transcription by RNA polymerase II. Essential for vegetative cell growth and chromosome segregation. The chain is 5'-3' exoribonuclease 2 (RAT1) from Gibberella zeae (strain ATCC MYA-4620 / CBS 123657 / FGSC 9075 / NRRL 31084 / PH-1) (Wheat head blight fungus).